Reading from the N-terminus, the 209-residue chain is Ribonuclease HII (209 aa).

Residues 18–209 (GLVAGVDEVG…FKPVKALLER (192 aa)) form the RNase H type-2 domain. Asp24, Glu25, and Asp116 together coordinate a divalent metal cation.

Belongs to the RNase HII family. Mn(2+) is required as a cofactor. The cofactor is Mg(2+).

It localises to the cytoplasm. It carries out the reaction Endonucleolytic cleavage to 5'-phosphomonoester.. Functionally, endonuclease that specifically degrades the RNA of RNA-DNA hybrids. The chain is Ribonuclease HII from Shewanella sp. (strain MR-7).